The following is a 321-amino-acid chain: Lipoyl synthase (321 aa).

Residues Cys68, Cys73, Cys79, Cys94, Cys98, Cys101, and Ser308 each contribute to the [4Fe-4S] cluster site. In terms of domain architecture, Radical SAM core spans 80-297; it reads FNHGTATFMI…KAEAMAMGFT (218 aa).

This sequence belongs to the radical SAM superfamily. Lipoyl synthase family. The cofactor is [4Fe-4S] cluster.

The protein localises to the cytoplasm. The catalysed reaction is [[Fe-S] cluster scaffold protein carrying a second [4Fe-4S](2+) cluster] + N(6)-octanoyl-L-lysyl-[protein] + 2 oxidized [2Fe-2S]-[ferredoxin] + 2 S-adenosyl-L-methionine + 4 H(+) = [[Fe-S] cluster scaffold protein] + N(6)-[(R)-dihydrolipoyl]-L-lysyl-[protein] + 4 Fe(3+) + 2 hydrogen sulfide + 2 5'-deoxyadenosine + 2 L-methionine + 2 reduced [2Fe-2S]-[ferredoxin]. It participates in protein modification; protein lipoylation via endogenous pathway; protein N(6)-(lipoyl)lysine from octanoyl-[acyl-carrier-protein]: step 2/2. In terms of biological role, catalyzes the radical-mediated insertion of two sulfur atoms into the C-6 and C-8 positions of the octanoyl moiety bound to the lipoyl domains of lipoate-dependent enzymes, thereby converting the octanoylated domains into lipoylated derivatives. This chain is Lipoyl synthase, found in Yersinia enterocolitica serotype O:8 / biotype 1B (strain NCTC 13174 / 8081).